The chain runs to 272 residues: Dermonecrotic toxin LspaSicTox-alphaII1 (272 aa).

His5 is a catalytic residue. 2 residues coordinate Mg(2+): Glu25 and Asp27. His41 acts as the Nucleophile in catalysis. 2 disulfide bridges follow: Cys45–Cys51 and Cys47–Cys190. Mg(2+) is bound at residue Asp85.

The protein belongs to the arthropod phospholipase D family. Class II subfamily. The cofactor is Mg(2+). Expressed by the venom gland.

The protein resides in the secreted. The enzyme catalyses an N-(acyl)-sphingosylphosphocholine = an N-(acyl)-sphingosyl-1,3-cyclic phosphate + choline. It carries out the reaction an N-(acyl)-sphingosylphosphoethanolamine = an N-(acyl)-sphingosyl-1,3-cyclic phosphate + ethanolamine. The catalysed reaction is a 1-acyl-sn-glycero-3-phosphocholine = a 1-acyl-sn-glycero-2,3-cyclic phosphate + choline. It catalyses the reaction a 1-acyl-sn-glycero-3-phosphoethanolamine = a 1-acyl-sn-glycero-2,3-cyclic phosphate + ethanolamine. Its function is as follows. Dermonecrotic toxins cleave the phosphodiester linkage between the phosphate and headgroup of certain phospholipids (sphingolipid and lysolipid substrates), forming an alcohol (often choline) and a cyclic phosphate. This toxin acts on sphingomyelin (SM). It may also act on ceramide phosphoethanolamine (CPE), lysophosphatidylcholine (LPC) and lysophosphatidylethanolamine (LPE), but not on lysophosphatidylserine (LPS), and lysophosphatidylglycerol (LPG). It acts by transphosphatidylation, releasing exclusively cyclic phosphate products as second products. Induces dermonecrosis, hemolysis, increased vascular permeability, edema, inflammatory response, and platelet aggregation. This chain is Dermonecrotic toxin LspaSicTox-alphaII1, found in Loxosceles spadicea (Recluse spider).